Reading from the N-terminus, the 192-residue chain is Ras-like GTP-binding protein rhoA (192 aa).

Gly12 to Thr19 serves as a coordination point for GTP. Positions Tyr34 to Tyr42 match the Effector region motif. Residues Asp59 to Gln63 and Asn117 to Asp120 contribute to the GTP site. Cysteine methyl ester is present on Cys189. Cys189 is lipidated: S-geranylgeranyl cysteine. Residues Met190–Leu192 constitute a propeptide, removed in mature form.

This sequence belongs to the small GTPase superfamily. Rho family. In terms of assembly, may interact with unc-89 (via DN and PH domains). Interacts with bli-3 and memo-1. In terms of tissue distribution, in larvae and adults, enriched at the tip of the head where the anterior sensory organ is located and in the pharyngeal nerve ring (at protein level). In embryos, enriched at the boundaries of dorsal cells undergoing intercalation, ventral enclosure and elongation.

The protein resides in the cell membrane. Its subcellular location is the cytoplasm. The protein localises to the cytoskeleton. It localises to the cell cortex. Its activity is regulated as follows. GTP hydrolysis is stimulated by unc-89. Its function is as follows. Required for ventral migration of epidermal cells during ventral enclosure in the embryo and for cell elongation. Also required for ventral migration of P cells during larval development. Involved in asymmetric spindle positioning during anaphase and establishment of cell polarity during embryo development. In adults, involved in regulation of multiple processes including locomotion, pharyngeal pumping, fecundity, ovulation, defecation and body morphology. In body wall muscles, regulates organization of myosin thick filaments downstream of unc-89. Association with the oxidase bli-3 promotes ROS production and this interaction may be modulated by memo-1, in order to control the oxidative stress response and longevity. This Caenorhabditis elegans protein is Ras-like GTP-binding protein rhoA.